Here is a 299-residue protein sequence, read N- to C-terminus: Ethylmalonyl-CoA decarboxylase (299 aa).

The protein belongs to the enoyl-CoA hydratase/isomerase family.

It is found in the cytoplasm. The protein resides in the cytosol. It carries out the reaction (2S)-ethylmalonyl-CoA + H(+) = butanoyl-CoA + CO2. It catalyses the reaction (S)-methylmalonyl-CoA + H(+) = propanoyl-CoA + CO2. The enzyme catalyses (2R)-ethylmalonyl-CoA + H(+) = butanoyl-CoA + CO2. Functionally, decarboxylates ethylmalonyl-CoA, a potentially toxic metabolite, to form butyryl-CoA, suggesting it might be involved in metabolite proofreading. Acts preferentially on (S)-ethylmalonyl-CoA but also has some activity on the (R)-isomer. Also has methylmalonyl-CoA decarboxylase activity at lower level. The protein is Ethylmalonyl-CoA decarboxylase (echdc1) of Xenopus laevis (African clawed frog).